Here is a 385-residue protein sequence, read N- to C-terminus: Cytochrome b (385 aa).

Residues 1 to 27 lie on the Mitochondrial matrix side of the membrane; that stretch reads MAFRKSNVYLSLVNSYIIDSPQPSSIN. Tyr-16 contributes to the a ubiquinone binding site. Residues 28-51 traverse the membrane as a helical segment; that stretch reads YWWNMGSLLGLCLVIQIVTGIFMA. The Mitochondrial intermembrane segment spans residues 52-74; sequence MHYSSNIELAFSSVEHIMRDVHN. Residues 75-102 traverse the membrane as a helical segment; sequence GYILRYLHANGASFFFMVMFMHMAKGLY. Residues His-82 and His-96 each coordinate heme b. Residues 103 to 110 are Mitochondrial matrix-facing; the sequence is YGSYRSPR. Residues 111 to 135 form a helical membrane-spanning segment; the sequence is VTLWNVGVIIFILTIATAFLGYCCV. Residues 136–172 lie on the Mitochondrial intermembrane side of the membrane; that stretch reads YGQMSHWGATVITNLFSAIPFVGNDIVSWLWGGFSVS. The helical transmembrane segment at 173–204 threads the bilayer; sequence NPTIQRFFALHYLVPFIIAAMVIMHLMALHIH. The heme b site is built by His-183 and His-197. His-202 serves as a coordination point for a ubiquinone. Topologically, residues 205 to 223 are mitochondrial matrix; sequence GSSNPLGITGNLDRIPMHS. The chain crosses the membrane as a helical span at residues 224–246; the sequence is YFIFKDLVTVFLFMLILALFVFY. Residues 247-287 are Mitochondrial intermembrane-facing; it reads SPNTLGHPDNYIPGNPLVTPASIVPEWYLLPFYAILRSIPD. Residues 288 to 308 traverse the membrane as a helical segment; it reads KLLGVITMFAAILVLLVLPFT. Over 309–319 the chain is Mitochondrial matrix; the sequence is DRSVVRGNTFK. A helical membrane pass occupies residues 320–340; sequence VLSKFFFFIFVFNFVLLGQIG. The Mitochondrial intermembrane segment spans residues 341–347; that stretch reads ACHVEVP. The helical transmembrane segment at 348–364 threads the bilayer; sequence YVLMGQIATFIYFAYFL. Over 365-385 the chain is Mitochondrial matrix; that stretch reads IIVPVISTIENVLFYIGRVNK.

This sequence belongs to the cytochrome b family. Component of the ubiquinol-cytochrome c oxidoreductase (cytochrome b-c1 complex, complex III, CIII), a multisubunit enzyme composed of 10 subunits. The complex is composed of 3 respiratory subunits cytochrome b (COB), cytochrome c1 (CYT1) and Rieske protein (RIP1), 2 core protein subunits COR1 and QCR2, and 5 low-molecular weight protein subunits QCR6, QCR7, QCR8, QCR9 and QCR10. The complex exists as an obligatory dimer and forms supercomplexes (SCs) in the inner mitochondrial membrane with a monomer or a dimer of cytochrome c oxidase (complex IV, CIV), resulting in 2 different assemblies (supercomplexes III(2)IV and III(2)IV(2)). It depends on heme b as a cofactor.

It localises to the mitochondrion inner membrane. The enzyme catalyses a quinol + 2 Fe(III)-[cytochrome c](out) = a quinone + 2 Fe(II)-[cytochrome c](out) + 2 H(+)(out). Component of the ubiquinol-cytochrome c oxidoreductase, a multisubunit transmembrane complex that is part of the mitochondrial electron transport chain which drives oxidative phosphorylation. The respiratory chain contains 3 multisubunit complexes succinate dehydrogenase (complex II, CII), ubiquinol-cytochrome c oxidoreductase (cytochrome b-c1 complex, complex III, CIII) and cytochrome c oxidase (complex IV, CIV), that cooperate to transfer electrons derived from NADH and succinate to molecular oxygen, creating an electrochemical gradient over the inner membrane that drives transmembrane transport and the ATP synthase. The cytochrome b-c1 complex catalyzes electron transfer from ubiquinol to cytochrome c, linking this redox reaction to translocation of protons across the mitochondrial inner membrane, with protons being carried across the membrane as hydrogens on the quinol. In the process called Q cycle, 2 protons are consumed from the matrix, 4 protons are released into the intermembrane space and 2 electrons are passed to cytochrome c. Cytochrome b is a catalytic core subunit containing 2 b-type hemes BL and BH topographically segregated in the quinone reduction (Qi) and quinol oxidation (Q0) sites on opposite sides of the membrane. In Saccharomyces cerevisiae (strain ATCC 204508 / S288c) (Baker's yeast), this protein is Cytochrome b (COB).